Reading from the N-terminus, the 203-residue chain is Ribosomal RNA large subunit methyltransferase E (203 aa).

S-adenosyl-L-methionine is bound by residues Gly59, Trp61, Asp79, Asn95, and Asp118. The active-site Proton acceptor is the Lys158.

It belongs to the class I-like SAM-binding methyltransferase superfamily. RNA methyltransferase RlmE family.

It is found in the cytoplasm. It carries out the reaction uridine(2552) in 23S rRNA + S-adenosyl-L-methionine = 2'-O-methyluridine(2552) in 23S rRNA + S-adenosyl-L-homocysteine + H(+). Specifically methylates the uridine in position 2552 of 23S rRNA at the 2'-O position of the ribose in the fully assembled 50S ribosomal subunit. This Wigglesworthia glossinidia brevipalpis protein is Ribosomal RNA large subunit methyltransferase E.